Reading from the N-terminus, the 565-residue chain is Periplasmic trehalase (565 aa).

Residues Met1–Ala30 form the signal peptide. Substrate contacts are provided by residues Arg152, Trp159–Asp160, Asn196, Arg205–Gln207, Arg277–Glu279, and Gly310. Residues Asp312 and Glu496 each act as proton donor/acceptor in the active site. Residue Glu511 coordinates substrate. A disordered region spans residues Cys539 to Pro565.

The protein belongs to the glycosyl hydrolase 37 family. As to quaternary structure, monomer.

The protein localises to the periplasm. It carries out the reaction alpha,alpha-trehalose + H2O = alpha-D-glucose + beta-D-glucose. Functionally, provides the cells with the ability to utilize trehalose at high osmolarity by splitting it into glucose molecules that can subsequently be taken up by the phosphotransferase-mediated uptake system. This is Periplasmic trehalase from Escherichia coli O6:H1 (strain CFT073 / ATCC 700928 / UPEC).